We begin with the raw amino-acid sequence, 167 residues long: Epithelial membrane protein 2 (167 aa).

A helical transmembrane segment spans residues methionine 1–isoleucine 21. Asparagine 44, asparagine 47, and asparagine 52 each carry an N-linked (GlcNAc...) asparagine glycan. 3 helical membrane-spanning segments follow: residues threonine 67–phenylalanine 87, phenylalanine 95–isoleucine 115, and tyrosine 143–leucine 163.

It belongs to the PMP-22/EMP/MP20 family. Interacts with PTK2; regulates PTK2 activation and localization. Interacts with ITGB3; regulates the levels of the heterodimer ITGA5-ITGB3 integrin surface expression. Interacts with P2RX7 (via C-terminus). Interacts with ITGB1; the interaction may be direct or indirect and ITGB1 has a heterodimer form. In terms of tissue distribution, expressed in ciliary body epithelia, sclera, cornea, and retinal pigment epithelium (at protein level). Expressed in lung and endometrial tissue; expression is particularly abundant in secretory endometrium (at protein level). Expressed in placental villous syncytiotrophoblasts and cytotrophoblasts and on the membrane of interstitial trophoblasts (at protein level).

It localises to the golgi apparatus membrane. Its subcellular location is the cell membrane. It is found in the apical cell membrane. The protein resides in the membrane raft. The protein localises to the cytoplasm. It localises to the nucleus. Its subcellular location is the perinuclear region. Functionally, functions as a key regulator of cell membrane composition by regulating protein surface expression. Also, plays a role in regulation of processes including cell migration, cell proliferation, cell contraction and cell adhesion. Regulates transepithelial migration of neutrophils into the alveolar lumen, potentially via mediation of cell surface expression of adhesion markers and lipid raft formation. Negatively regulates caveolae formation by reducing CAV1 expression and CAV1 amount by increasing lysosomal degradation. Facilitates surface trafficking and formation of lipid rafts bearing GPI-anchor proteins. Regulates surface expression of MHC1 and ICAM1 proteins increasing susceptibility to T-cell mediated cytotoxicity. Regulates the plasma membrane expression of the integrin heterodimers ITGA6-ITGB1, ITGA5-ITGB3 and ITGA5-ITGB1 resulting in modulation of cell-matrix adhesion. Also regulates many processes through PTK2. Regulates blood vessel endothelial cell migration and angiogenesis by regulating VEGF protein expression through PTK2 activation. Regulates cell migration and cell contraction through PTK2 and SRC activation. Regulates focal adhesion density, F-actin conformation and cell adhesion capacity through interaction with PTK2. Positively regulates cell proliferation. Plays a role during cell death and cell blebbing. Promotes angiogenesis and vasculogenesis through induction of VEGFA via a HIF1A-dependent pathway. Also plays a role in embryo implantation by regulating surface trafficking of integrin heterodimer ITGA5-ITGB3. Plays a role in placental angiogenesis and uterine natural killer cell regulation at the maternal-fetal placental interface, however not required in the maternal tissues for a viable pregnancy. Involved in the early stages of embryogenic development and cardiogenesis, potentially via regulation of epithelial-mesenchymal transition timing. May play a role in glomerular filtration. The polypeptide is Epithelial membrane protein 2 (EMP2) (Homo sapiens (Human)).